The sequence spans 78 residues: Putative membrane protein insertion efficiency factor (78 aa).

This sequence belongs to the UPF0161 family.

The protein resides in the cell membrane. Functionally, could be involved in insertion of integral membrane proteins into the membrane. This is Putative membrane protein insertion efficiency factor from Limosilactobacillus reuteri (strain DSM 20016) (Lactobacillus reuteri).